Consider the following 517-residue polypeptide: GTPase Obg (517 aa).

The 158-residue stretch at Ala2–Val159 folds into the Obg domain. The 177-residue stretch at Ala160 to Lys336 folds into the OBG-type G domain. GTP-binding positions include Gly166–Ser173, Phe191–His195, Asp212–Gly215, Asn288–Asp291, and Ser317–Val319. Residues Ser173 and Thr193 each contribute to the Mg(2+) site. The 85-residue stretch at Pro355 to Pro439 folds into the OCT domain. Residues Glu490–Ala517 are disordered. The span at Ala497 to Ala517 shows a compositional bias: acidic residues.

This sequence belongs to the TRAFAC class OBG-HflX-like GTPase superfamily. OBG GTPase family. Monomer. It depends on Mg(2+) as a cofactor.

It is found in the cytoplasm. In terms of biological role, an essential GTPase which binds GTP, GDP and possibly (p)ppGpp with moderate affinity, with high nucleotide exchange rates and a fairly low GTP hydrolysis rate. Plays a role in control of the cell cycle, stress response, ribosome biogenesis and in those bacteria that undergo differentiation, in morphogenesis control. In Clavibacter sepedonicus (Clavibacter michiganensis subsp. sepedonicus), this protein is GTPase Obg.